A 393-amino-acid chain; its full sequence is Probable RNA methyltransferase sce3898 (393 aa).

Glu-82 (proton acceptor) is an active-site residue. The region spanning 90–329 (RPGRYSACVS…VRSARLDAFR (240 aa)) is the Radical SAM core domain. A disulfide bridge connects residues Cys-97 and Cys-353. Residues Cys-104, Cys-108, and Cys-111 each coordinate [4Fe-4S] cluster. Residues 157–158 (GE), 212–214 (SLG), and Asn-294 each bind S-adenosyl-L-methionine. Cys-353 (S-methylcysteine intermediate) is an active-site residue. The segment at 357–393 (ARPSAEAQRPGGRRAPPRPGATAGAADVGPSAPPRPA) is disordered. Low complexity predominate over residues 373–382 (PRPGATAGAA).

The protein belongs to the radical SAM superfamily. RlmN family. Requires [4Fe-4S] cluster as cofactor.

Its subcellular location is the cytoplasm. This Sorangium cellulosum (strain So ce56) (Polyangium cellulosum (strain So ce56)) protein is Probable RNA methyltransferase sce3898.